The chain runs to 104 residues: Flagellar hook-basal body complex protein FliE (104 aa).

The protein belongs to the FliE family.

It is found in the bacterial flagellum basal body. The protein is Flagellar hook-basal body complex protein FliE of Escherichia coli (strain SE11).